Consider the following 500-residue polypeptide: Pentatricopeptide repeat-containing protein At1g06580 (500 aa).

12 PPR repeats span residues 78 to 112 (SIVD…GISH), 113 to 147 (DLYS…GFEP), 148 to 182 (SIVT…GYEP), 183 to 217 (NVVI…GIRP), 218 to 252 (DVVT…GISP), 253 to 287 (DVIT…SVNP), 288 to 322 (NIVT…GFFP), 323 to 357 (NAVT…GVDG), 358 to 392 (DTFT…GVHP), 393 to 427 (DMYT…KTVV), 428 to 462 (GIIT…GVSP), and 463 to 498 (DVIT…GLMP).

Belongs to the PPR family. P subfamily.

This Arabidopsis thaliana (Mouse-ear cress) protein is Pentatricopeptide repeat-containing protein At1g06580.